The following is an 863-amino-acid chain: NACHT, LRR and PYD domains-containing protein 4B (863 aa).

In terms of domain architecture, Pyrin spans 1–93 (MASLFSDFGF…TNRATGEIAA (93 aa)). One can recognise an NACHT domain in the interval 143–466 (KMVVLQGVAG…FYLLHSEMDH (324 aa)). ATP is bound at residue 149–156 (GVAGIGKT). 7 LRR repeats span residues 618–643 (WHQI…IFNE), 683–706 (SYNL…MLCD), 717–740 (ILDL…LRQN), 741–763 (KSLR…ALCR), 765–782 (LTLP…ACQL), 797–824 (YKCL…AMKD), and 843–863 (SQEF…ENGV).

The protein belongs to the NLRP family.

Its function is as follows. May be involved in inflammation and recognition of cytosolic pathogen-associated molecular patterns (PAMPs) not intercepted by membrane-bound receptors. The protein is NACHT, LRR and PYD domains-containing protein 4B (Nlrp4b) of Mus musculus (Mouse).